A 113-amino-acid chain; its full sequence is Large ribosomal subunit protein uL24 (113 aa).

It belongs to the universal ribosomal protein uL24 family. Part of the 50S ribosomal subunit.

Its function is as follows. One of two assembly initiator proteins, it binds directly to the 5'-end of the 23S rRNA, where it nucleates assembly of the 50S subunit. One of the proteins that surrounds the polypeptide exit tunnel on the outside of the subunit. This is Large ribosomal subunit protein uL24 from Rickettsia prowazekii (strain Madrid E).